Here is a 1342-residue protein sequence, read N- to C-terminus: DNA-directed RNA polymerase subunit beta (1342 aa).

It belongs to the RNA polymerase beta chain family. In terms of assembly, the RNAP catalytic core consists of 2 alpha, 1 beta, 1 beta' and 1 omega subunit. When a sigma factor is associated with the core the holoenzyme is formed, which can initiate transcription.

The enzyme catalyses RNA(n) + a ribonucleoside 5'-triphosphate = RNA(n+1) + diphosphate. Functionally, DNA-dependent RNA polymerase catalyzes the transcription of DNA into RNA using the four ribonucleoside triphosphates as substrates. This Glaesserella parasuis serovar 5 (strain SH0165) (Haemophilus parasuis) protein is DNA-directed RNA polymerase subunit beta.